We begin with the raw amino-acid sequence, 106 residues long: MNKIRKGDEVIVLAGRDKGKRGTVSQRKDDSYLLIEGINLVKKHAKPNPLKGTTGGIIQKTMPIHQSNVAVFNAATGKADRVGIKVQSDGTRVRVFKSSGTEIKGT.

Belongs to the universal ribosomal protein uL24 family. Part of the 50S ribosomal subunit.

Its function is as follows. One of two assembly initiator proteins, it binds directly to the 5'-end of the 23S rRNA, where it nucleates assembly of the 50S subunit. One of the proteins that surrounds the polypeptide exit tunnel on the outside of the subunit. The chain is Large ribosomal subunit protein uL24 from Verminephrobacter eiseniae (strain EF01-2).